The sequence spans 296 residues: Sulfate adenylyltransferase subunit 2 (296 aa).

Belongs to the PAPS reductase family. CysD subfamily. Heterodimer composed of CysD, the smaller subunit, and CysN.

The catalysed reaction is sulfate + ATP + H(+) = adenosine 5'-phosphosulfate + diphosphate. It functions in the pathway sulfur metabolism; hydrogen sulfide biosynthesis; sulfite from sulfate: step 1/3. Functionally, with CysN forms the ATP sulfurylase (ATPS) that catalyzes the adenylation of sulfate producing adenosine 5'-phosphosulfate (APS) and diphosphate, the first enzymatic step in sulfur assimilation pathway. APS synthesis involves the formation of a high-energy phosphoric-sulfuric acid anhydride bond driven by GTP hydrolysis by CysN coupled to ATP hydrolysis by CysD. The sequence is that of Sulfate adenylyltransferase subunit 2 from Rhodospirillum rubrum (strain ATCC 11170 / ATH 1.1.1 / DSM 467 / LMG 4362 / NCIMB 8255 / S1).